A 419-amino-acid polypeptide reads, in one-letter code: Gustatory receptor for sugar taste 64c (419 aa).

Topologically, residues 1 to 15 are cytoplasmic; sequence MQQSGQKGTRNTLQH. A helical transmembrane segment spans residues 16–36; the sequence is AIGPVLVIAQFFGVLPVAGVW. Topologically, residues 37–48 are extracellular; that stretch reads PSCRPERVRFRW. A helical transmembrane segment spans residues 49 to 69; that stretch reads ISLSLLAALILFVFSIVDCAL. Over 70-82 the chain is Cytoplasmic; the sequence is SSKVVFDHGLKIY. The helical transmembrane segment at 83-103 threads the bilayer; that stretch reads TIGSLSFSVICIFCFGVFLLL. At 104-139 the chain is on the extracellular side; it reads SRRWPYIIRRTAECEQIFLEPEYDCSYGRGYSSRLR. The chain crosses the membrane as a helical span at residues 140–160; it reads LWGVCMLVAALCEHSTYVGSA. Over 161 to 204 the chain is Cytoplasmic; sequence LYNNHLAIVECKLDANFWQNYFQRERQQLFLIMHFTAWWIPFIE. A helical membrane pass occupies residues 205–225; that stretch reads WTTLSMTFVWNFVDIFLILIC. Topologically, residues 226 to 305 are extracellular; the sequence is RGMQMRFQQM…FQSKGNYADE (80 aa). Residues 306–326 form a helical membrane-spanning segment; the sequence is LYFWFCLSYVIIRVLNMMFAA. Residues 327–377 are Cytoplasmic-facing; that stretch reads SSIPQEAKEISYTLYEIPTEFWCVELRRLNEIFLSDHFALSGKGYFLLTRR. Residues 378–398 form a helical membrane-spanning segment; it reads LIFAMAATLMVYELVLINQMA. Over 399–419 the chain is Extracellular; sequence GSEVQKSFCEGGVGSSKSIFS.

It belongs to the insect chemoreceptor superfamily. Gustatory receptor (GR) family. Gr5a subfamily. As to expression, expressed in Gr5a-expressing sugar-sensing cells.

The protein localises to the cell membrane. Its function is as follows. One of the few identified sugar gustatory receptors identified so far and which promotes the starvation-induced increase of feeding motivation. This is Gustatory receptor for sugar taste 64c (Gr64c) from Drosophila melanogaster (Fruit fly).